A 212-amino-acid chain; its full sequence is MKSFAACVLLLCALFFEQVFAVRFDIPASTKPEQVCIRDFVSEGQLVLIDIETDGSVGDGQQLNLYVRDSNGNEYRRNRDIAGEVRVVFTAPQSTSFDVCFENVAQVNGRSLSRSIELDIESGSEARDWNKIQASEKLKPVEVELRRIEELTDEIVDEFNYLKGREERLRDTNESTNRRVRNFSIAVIVVLVALGAWQVNYMKNFFRAKHII.

Residues 1–21 (MKSFAACVLLLCALFFEQVFA) form the signal peptide. Over 22-181 (VRFDIPASTK…TNESTNRRVR (160 aa)) the chain is Lumenal. Positions 34-122 (QVCIRDFVSE…SRSIELDIES (89 aa)) constitute a GOLD domain. Residues 182–202 (NFSIAVIVVLVALGAWQVNYM) form a helical membrane-spanning segment. Residues 203 to 212 (KNFFRAKHII) lie on the Cytoplasmic side of the membrane.

Belongs to the EMP24/GP25L family.

It is found in the endoplasmic reticulum membrane. The protein localises to the golgi apparatus membrane. Its function is as follows. Constituent of COPII-coated endoplasmic reticulum-derived transport vesicles. Required for efficient transport of a subset of secretory proteins to the Golgi. Facilitates retrograde transport from the Golgi to the endoplasmic reticulum. In Kluyveromyces lactis (strain ATCC 8585 / CBS 2359 / DSM 70799 / NBRC 1267 / NRRL Y-1140 / WM37) (Yeast), this protein is Endoplasmic reticulum vesicle protein 25 (ERV25).